A 263-amino-acid chain; its full sequence is Copper homeostasis protein cutC homolog (263 aa).

The protein belongs to the CutC family.

Functionally, involved in copper homeostasis. The polypeptide is Copper homeostasis protein cutC homolog (Drosophila melanogaster (Fruit fly)).